We begin with the raw amino-acid sequence, 89 residues long: Small ribosomal subunit protein uS15 (89 aa).

The protein belongs to the universal ribosomal protein uS15 family. In terms of assembly, part of the 30S ribosomal subunit. Forms a bridge to the 50S subunit in the 70S ribosome, contacting the 23S rRNA.

One of the primary rRNA binding proteins, it binds directly to 16S rRNA where it helps nucleate assembly of the platform of the 30S subunit by binding and bridging several RNA helices of the 16S rRNA. Its function is as follows. Forms an intersubunit bridge (bridge B4) with the 23S rRNA of the 50S subunit in the ribosome. The polypeptide is Small ribosomal subunit protein uS15 (Rhizobium etli (strain CIAT 652)).